A 414-amino-acid polypeptide reads, in one-letter code: 2,3-bisphosphoglycerate-independent phosphoglycerate mutase (414 aa).

The protein belongs to the BPG-independent phosphoglycerate mutase family. A-PGAM subfamily.

It catalyses the reaction (2R)-2-phosphoglycerate = (2R)-3-phosphoglycerate. The protein operates within carbohydrate degradation; glycolysis; pyruvate from D-glyceraldehyde 3-phosphate: step 3/5. In terms of biological role, catalyzes the interconversion of 2-phosphoglycerate and 3-phosphoglycerate. The sequence is that of 2,3-bisphosphoglycerate-independent phosphoglycerate mutase from Saccharolobus islandicus (strain L.S.2.15 / Lassen #1) (Sulfolobus islandicus).